The following is a 254-amino-acid chain: Alcohol dehydrogenase (254 aa).

Position 10 to 33 (phenylalanine 10 to leucine 33) interacts with NAD(+). Residue serine 138 participates in substrate binding. The active-site Proton acceptor is the tyrosine 151.

The protein belongs to the short-chain dehydrogenases/reductases (SDR) family. As to quaternary structure, homodimer.

The enzyme catalyses a primary alcohol + NAD(+) = an aldehyde + NADH + H(+). It catalyses the reaction a secondary alcohol + NAD(+) = a ketone + NADH + H(+). In Drosophila pseudoobscura pseudoobscura (Fruit fly), this protein is Alcohol dehydrogenase (Adh).